We begin with the raw amino-acid sequence, 692 residues long: Threonine--tRNA ligase (692 aa).

The TGS domain occupies 2-59 (AEAHISITVNGEAKEVEASQTGVELFADDKNIIAVRLNGELRDLYTPLHDGDNVESVT). Residues 255–561 (DHRKLGQEMD…LLEHYAGAFP (307 aa)) form a catalytic region. Zn(2+) contacts are provided by C360, H411, and H538.

The protein belongs to the class-II aminoacyl-tRNA synthetase family. Homodimer. The cofactor is Zn(2+).

Its subcellular location is the cytoplasm. The catalysed reaction is tRNA(Thr) + L-threonine + ATP = L-threonyl-tRNA(Thr) + AMP + diphosphate + H(+). In terms of biological role, catalyzes the attachment of threonine to tRNA(Thr) in a two-step reaction: L-threonine is first activated by ATP to form Thr-AMP and then transferred to the acceptor end of tRNA(Thr). Also edits incorrectly charged L-seryl-tRNA(Thr). The chain is Threonine--tRNA ligase from Bifidobacterium animalis subsp. lactis (strain AD011).